We begin with the raw amino-acid sequence, 678 residues long: Penicillin-binding protein activator LpoA (678 aa).

A signal peptide spans 1 to 26 (MVPSTFSRLKAARCLPVVLAALIFAG). Cys-27 carries the N-palmitoyl cysteine lipid modification. Cys-27 is lipidated: S-diacylglycerol cysteine. Disordered regions lie at residues 304 to 338 (AEQP…SVPV) and 495 to 530 (IALT…QFTN). The segment covering 513-529 (TTNNPTLQTTPTDDQFT) has biased composition (low complexity).

The protein belongs to the LpoA family. In terms of assembly, interacts with PBP1a.

It is found in the cell outer membrane. Functionally, regulator of peptidoglycan synthesis that is essential for the function of penicillin-binding protein 1A (PBP1a). The polypeptide is Penicillin-binding protein activator LpoA (Escherichia coli O6:H1 (strain CFT073 / ATCC 700928 / UPEC)).